Reading from the N-terminus, the 706-residue chain is Ribosomal RNA large subunit methyltransferase K/L (706 aa).

One can recognise a THUMP domain in the interval leucine 43–leucine 154.

This sequence belongs to the methyltransferase superfamily. RlmKL family.

It localises to the cytoplasm. It carries out the reaction guanosine(2445) in 23S rRNA + S-adenosyl-L-methionine = N(2)-methylguanosine(2445) in 23S rRNA + S-adenosyl-L-homocysteine + H(+). The enzyme catalyses guanosine(2069) in 23S rRNA + S-adenosyl-L-methionine = N(2)-methylguanosine(2069) in 23S rRNA + S-adenosyl-L-homocysteine + H(+). Its function is as follows. Specifically methylates the guanine in position 2445 (m2G2445) and the guanine in position 2069 (m7G2069) of 23S rRNA. This Yersinia pestis bv. Antiqua (strain Antiqua) protein is Ribosomal RNA large subunit methyltransferase K/L.